The chain runs to 99 residues: Small ribosomal subunit protein bS6c (99 aa).

This sequence belongs to the bacterial ribosomal protein bS6 family.

Its subcellular location is the plastid. The protein resides in the chloroplast. Functionally, binds together with bS18 to 16S ribosomal RNA. The sequence is that of Small ribosomal subunit protein bS6c from Cyanidioschyzon merolae (strain NIES-3377 / 10D) (Unicellular red alga).